Consider the following 71-residue polypeptide: Cytochrome c oxidase subunit 7, mitochondrial (71 aa).

Topologically, residues 1 to 35 (MPGLVNAPNHVPEKQRYYQQAFKNHTRLWKIGPRS) are mitochondrial matrix. The helical transmembrane segment at 36 to 58 (GIIMTTFNIAMWGTFGASMYAMS) threads the bilayer. Residues 59–71 (RKVLGYNTWFSED) are Mitochondrial intermembrane-facing.

Belongs to the cytochrome c oxidase VIIa family. As to quaternary structure, component of the cytochrome c oxidase (complex IV, CIV), a multisubunit enzyme composed of 11 subunits. The complex is composed of a catalytic core of 3 subunits Cox1, Cox2 and Cox3, encoded in the mitochondrial DNA, and 8 supernumerary subunits Cox4, Cox5a/Cox5, Cox6, Cox7, Cox8, Cox7a/Cox9, Cox6b/Cox12 and Cox6a/Cox13, which are encoded in the nuclear genome. The complex exists as a monomer or a dimer and forms respiratory supercomplexes (SCs) in the inner mitochondrial membrane with NADH-ubiquinone oxidoreductase (complex I, CI) and ubiquinol-cytochrome c oxidoreductase (cytochrome b-c1 complex, complex III, CIII), resulting in various different assemblies (supercomplexes I(1)IV(1), I(1)III(3)IV(2), III(2)IV(1) and III(2)IV(2) as well as larger supercomplexes of compositions like I(1)III(2)IV(5-6)).

The protein resides in the mitochondrion inner membrane. Its pathway is energy metabolism; oxidative phosphorylation. In terms of biological role, component of the cytochrome c oxidase, the last enzyme in the mitochondrial electron transport chain which drives oxidative phosphorylation. The respiratory chain contains 3 multisubunit complexes succinate dehydrogenase (complex II, CII), ubiquinol-cytochrome c oxidoreductase (cytochrome b-c1 complex, complex III, CIII) and cytochrome c oxidase (complex IV, CIV), that cooperate to transfer electrons derived from NADH and succinate to molecular oxygen, creating an electrochemical gradient over the inner membrane that drives transmembrane transport and the ATP synthase. Cytochrome c oxidase is the component of the respiratory chain that catalyzes the reduction of oxygen to water. Electrons originating from reduced cytochrome c in the intermembrane space (IMS) are transferred via the dinuclear copper A center (CU(A)) of Cox2 and heme A of Cox1 to the active site in Cox1, a binuclear center (BNC) formed by heme A3 and copper B (CU(B)). The BNC reduces molecular oxygen to 2 water molecules using 4 electrons from cytochrome c in the IMS and 4 protons from the mitochondrial matrix. This is Cytochrome c oxidase subunit 7, mitochondrial from Neurospora crassa (strain ATCC 24698 / 74-OR23-1A / CBS 708.71 / DSM 1257 / FGSC 987).